The chain runs to 1002 residues: ATP-dependent DNA helicase MPH1 (1002 aa).

One can recognise a Helicase ATP-binding domain in the interval 108–275 (IVRCALFENV…EVVNNLHISK (168 aa)). An ATP-binding site is contributed by 121–128 (IPTGTGKT). The DEAH box motif lies at 223-226 (DEAH). Residues 506–669 (DEETYIRKNK…ALEYTKSDRI (164 aa)) form the Helicase C-terminal domain. Over residues 531-551 (ENRVEEEKKRQKEQAKLERTG) the composition is skewed to basic and acidic residues. 2 disordered regions span residues 531-569 (ENRV…NQKQ) and 799-843 (AKSQ…DSHT). A compositionally biased stretch (polar residues) spans 553-568 (RTGSSEEAQLSGMNQK).

This sequence belongs to the DEAD box helicase family. DEAH subfamily. FANCM sub-subfamily. Interacts with the MHF histone-fold complex to form the FANCM-MHF complex.

Its subcellular location is the nucleus. It catalyses the reaction ATP + H2O = ADP + phosphate + H(+). Functionally, ATP-dependent DNA helicase involved in DNA damage repair by homologous recombination and in genome maintenance. Capable of unwinding D-loops. Plays a role in limiting crossover recombinants during mitotic DNA double-strand break (DSB) repair. Component of a FANCM-MHF complex which promotes gene conversion at blocked replication forks, probably by reversal of the stalled fork. The polypeptide is ATP-dependent DNA helicase MPH1 (Kluyveromyces lactis (strain ATCC 8585 / CBS 2359 / DSM 70799 / NBRC 1267 / NRRL Y-1140 / WM37) (Yeast)).